Consider the following 366-residue polypeptide: GDSL esterase/lipase At1g74460 (366 aa).

A signal peptide spans 1–20 (MKFCAIFVLFIVLAINGYDC). Ser-30 acts as the Nucleophile in catalysis. N-linked (GlcNAc...) asparagine glycosylation is found at Asn-113 and Asn-260. Active-site residues include Asp-320 and His-323.

This sequence belongs to the 'GDSL' lipolytic enzyme family.

Its subcellular location is the secreted. In Arabidopsis thaliana (Mouse-ear cress), this protein is GDSL esterase/lipase At1g74460.